The following is an 85-amino-acid chain: Beta-insect depressant toxin BmKITb (85 aa).

An N-terminal signal peptide occupies residues 1 to 21; the sequence is MKLFLLLVISASMLIDGLVNA. One can recognise an LCN-type CS-alpha/beta domain in the interval 22-82; that stretch reads DGYIRGSNGC…TWKSESNTCG (61 aa). Cystine bridges form between C31/C81, C35/C56, C42/C63, and C46/C65. Position 82 is a glycine amide (G82).

As to expression, expressed by the venom gland.

Its subcellular location is the secreted. Depressant insect beta-toxins cause a transient contraction paralysis followed by a slow flaccid paralysis. They bind voltage-independently at site-4 of sodium channels (Nav) and shift the voltage of activation toward more negative potentials thereby affecting sodium channel activation and promoting spontaneous and repetitive firing. However, this toxin has some characteristics of excitatory toxins such as bursts of activity after the membrane has been hyperpolarized. This toxin is active only on insects. The protein is Beta-insect depressant toxin BmKITb of Olivierus martensii (Manchurian scorpion).